The chain runs to 346 residues: Histidinol-phosphate aminotransferase (346 aa).

Residue K209 is modified to N6-(pyridoxal phosphate)lysine.

The protein belongs to the class-II pyridoxal-phosphate-dependent aminotransferase family. Histidinol-phosphate aminotransferase subfamily. Homodimer. The cofactor is pyridoxal 5'-phosphate.

It carries out the reaction L-histidinol phosphate + 2-oxoglutarate = 3-(imidazol-4-yl)-2-oxopropyl phosphate + L-glutamate. It participates in amino-acid biosynthesis; L-histidine biosynthesis; L-histidine from 5-phospho-alpha-D-ribose 1-diphosphate: step 7/9. The polypeptide is Histidinol-phosphate aminotransferase (Vibrio parahaemolyticus serotype O3:K6 (strain RIMD 2210633)).